The primary structure comprises 352 residues: Very-long-chain 3-oxoacyl-CoA reductase (352 aa).

Residues 20–40 (TLWFIFIFGLLKLVPFALRFL) form a helical membrane-spanning segment. NADP(+)-binding residues include V66, D120, N147, Y228, K232, V261, and S263. The active-site Proton donor is the Y228. K232 serves as the catalytic Lowers pKa of active site Tyr.

This sequence belongs to the short-chain dehydrogenases/reductases (SDR) family.

The protein resides in the endoplasmic reticulum membrane. It carries out the reaction a very-long-chain (3R)-3-hydroxyacyl-CoA + NADP(+) = a very-long-chain 3-oxoacyl-CoA + NADPH + H(+). Its pathway is lipid metabolism; fatty acid biosynthesis. Functionally, component of the microsomal membrane bound fatty acid elongation system, which produces the 26-carbon very long-chain fatty acids (VLCFA) from palmitate. Catalyzes the reduction of the 3-ketoacyl-CoA intermediate that is formed in each cycle of fatty acid elongation. VLCFAs serve as precursors for ceramide and sphingolipids. In Candida glabrata (strain ATCC 2001 / BCRC 20586 / JCM 3761 / NBRC 0622 / NRRL Y-65 / CBS 138) (Yeast), this protein is Very-long-chain 3-oxoacyl-CoA reductase.